The following is a 288-amino-acid chain: Bifunctional protein FolD 2 (288 aa).

Residues 166–168 (GRS) and S191 each bind NADP(+).

The protein belongs to the tetrahydrofolate dehydrogenase/cyclohydrolase family. Homodimer.

It carries out the reaction (6R)-5,10-methylene-5,6,7,8-tetrahydrofolate + NADP(+) = (6R)-5,10-methenyltetrahydrofolate + NADPH. It catalyses the reaction (6R)-5,10-methenyltetrahydrofolate + H2O = (6R)-10-formyltetrahydrofolate + H(+). It participates in one-carbon metabolism; tetrahydrofolate interconversion. Functionally, catalyzes the oxidation of 5,10-methylenetetrahydrofolate to 5,10-methenyltetrahydrofolate and then the hydrolysis of 5,10-methenyltetrahydrofolate to 10-formyltetrahydrofolate. The protein is Bifunctional protein FolD 2 of Frankia alni (strain DSM 45986 / CECT 9034 / ACN14a).